The primary structure comprises 540 residues: Phosphoenolpyruvate carboxykinase (ATP) (540 aa).

Residue Arg-65 coordinates substrate. Lys-87 carries the N6-acetyllysine modification. Residues Tyr-207 and Lys-213 each contribute to the substrate site. ATP contacts are provided by residues Lys-213, His-232, and 248-256 (GLSGTGKTT). Mn(2+) contacts are provided by Lys-213 and His-232. Position 269 (Asp-269) interacts with Mn(2+). Residues Glu-297, Arg-333, 449–450 (RI), and Thr-455 contribute to the ATP site. A substrate-binding site is contributed by Arg-333. Lys-523 is subject to N6-acetyllysine.

This sequence belongs to the phosphoenolpyruvate carboxykinase (ATP) family. As to quaternary structure, monomer. Requires Mn(2+) as cofactor.

The protein localises to the cytoplasm. The catalysed reaction is oxaloacetate + ATP = phosphoenolpyruvate + ADP + CO2. Its pathway is carbohydrate biosynthesis; gluconeogenesis. Involved in the gluconeogenesis. Catalyzes the conversion of oxaloacetate (OAA) to phosphoenolpyruvate (PEP) through direct phosphoryl transfer between the nucleoside triphosphate and OAA. This Escherichia coli O6:H1 (strain CFT073 / ATCC 700928 / UPEC) protein is Phosphoenolpyruvate carboxykinase (ATP).